Here is a 289-residue protein sequence, read N- to C-terminus: Probable endonuclease 4 (289 aa).

Zn(2+) contacts are provided by histidine 74, histidine 115, glutamate 150, aspartate 184, histidine 187, histidine 218, aspartate 231, histidine 233, and glutamate 263.

This sequence belongs to the AP endonuclease 2 family. Zn(2+) serves as cofactor.

It catalyses the reaction Endonucleolytic cleavage to 5'-phosphooligonucleotide end-products.. Endonuclease IV plays a role in DNA repair. It cleaves phosphodiester bonds at apurinic or apyrimidinic (AP) sites, generating a 3'-hydroxyl group and a 5'-terminal sugar phosphate. The polypeptide is Probable endonuclease 4 (Mycoplasma capricolum subsp. capricolum (strain California kid / ATCC 27343 / NCTC 10154)).